A 632-amino-acid chain; its full sequence is Mediator of RNA polymerase II transcription subunit 17 (632 aa).

2 disordered regions span residues 1–21 (MSDS…RPDS) and 50–72 (EDKH…DLET). Over residues 11–21 (PIREKRDRPDS) the composition is skewed to basic and acidic residues. The span at 58–72 (EEDDEGDKESTDLET) shows a compositional bias: acidic residues.

The protein belongs to the Mediator complex subunit 17 family. Component of the Mediator complex.

The protein resides in the nucleus. Functionally, component of the Mediator complex, a coactivator involved in the regulated transcription of nearly all RNA polymerase II-dependent genes. Mediator functions as a bridge to convey information from gene-specific regulatory proteins to the basal RNA polymerase II transcription machinery. Mediator is recruited to promoters by direct interactions with regulatory proteins and serves as a scaffold for the assembly of a functional preinitiation complex with RNA polymerase II and the general transcription factors. In Emericella nidulans (strain FGSC A4 / ATCC 38163 / CBS 112.46 / NRRL 194 / M139) (Aspergillus nidulans), this protein is Mediator of RNA polymerase II transcription subunit 17 (srb4).